Here is a 372-residue protein sequence, read N- to C-terminus: Histidinol-phosphate aminotransferase (372 aa).

K230 is modified (N6-(pyridoxal phosphate)lysine).

It belongs to the class-II pyridoxal-phosphate-dependent aminotransferase family. Histidinol-phosphate aminotransferase subfamily. Homodimer. The cofactor is pyridoxal 5'-phosphate.

It catalyses the reaction L-histidinol phosphate + 2-oxoglutarate = 3-(imidazol-4-yl)-2-oxopropyl phosphate + L-glutamate. It functions in the pathway amino-acid biosynthesis; L-histidine biosynthesis; L-histidine from 5-phospho-alpha-D-ribose 1-diphosphate: step 7/9. The sequence is that of Histidinol-phosphate aminotransferase from Paenarthrobacter aurescens (strain TC1).